The following is a 341-amino-acid chain: Phenylalanine--tRNA ligase alpha subunit (341 aa).

Glu259 is a Mg(2+) binding site.

It belongs to the class-II aminoacyl-tRNA synthetase family. Phe-tRNA synthetase alpha subunit type 1 subfamily. As to quaternary structure, tetramer of two alpha and two beta subunits. It depends on Mg(2+) as a cofactor.

It localises to the cytoplasm. It catalyses the reaction tRNA(Phe) + L-phenylalanine + ATP = L-phenylalanyl-tRNA(Phe) + AMP + diphosphate + H(+). This chain is Phenylalanine--tRNA ligase alpha subunit, found in Mycobacterium bovis (strain ATCC BAA-935 / AF2122/97).